The sequence spans 276 residues: NH(3)-dependent NAD(+) synthetase (276 aa).

43–50 is an ATP binding site; that stretch reads GISGGVDS. Aspartate 49 contacts Mg(2+). Arginine 146 is a binding site for deamido-NAD(+). Threonine 166 lines the ATP pocket. Residue glutamate 171 participates in Mg(2+) binding. Deamido-NAD(+) contacts are provided by lysine 179 and aspartate 186. ATP-binding residues include lysine 195 and threonine 217. 266-267 contacts deamido-NAD(+); the sequence is HK.

It belongs to the NAD synthetase family. Homodimer.

The enzyme catalyses deamido-NAD(+) + NH4(+) + ATP = AMP + diphosphate + NAD(+) + H(+). Its pathway is cofactor biosynthesis; NAD(+) biosynthesis; NAD(+) from deamido-NAD(+) (ammonia route): step 1/1. Its function is as follows. Catalyzes the ATP-dependent amidation of deamido-NAD to form NAD. Uses ammonia as a nitrogen source. This chain is NH(3)-dependent NAD(+) synthetase, found in Aliivibrio salmonicida (strain LFI1238) (Vibrio salmonicida (strain LFI1238)).